The sequence spans 476 residues: Probable cytosolic Fe-S cluster assembly factor GI11683 (476 aa).

[4Fe-4S] cluster contacts are provided by C23, C68, C71, C74, C187, C243, C395, and C399.

The protein belongs to the NARF family.

Functionally, component of the cytosolic iron-sulfur (Fe/S) protein assembly machinery. Required for maturation of extramitochondrial Fe/S proteins. The chain is Probable cytosolic Fe-S cluster assembly factor GI11683 from Drosophila mojavensis (Fruit fly).